Reading from the N-terminus, the 170-residue chain is Peptide deformylase (170 aa).

Residues C91 and H133 each contribute to the Fe cation site. E134 is a catalytic residue. A Fe cation-binding site is contributed by H137.

The protein belongs to the polypeptide deformylase family. Fe(2+) is required as a cofactor.

It carries out the reaction N-terminal N-formyl-L-methionyl-[peptide] + H2O = N-terminal L-methionyl-[peptide] + formate. Functionally, removes the formyl group from the N-terminal Met of newly synthesized proteins. Requires at least a dipeptide for an efficient rate of reaction. N-terminal L-methionine is a prerequisite for activity but the enzyme has broad specificity at other positions. This Glaesserella parasuis serovar 5 (strain SH0165) (Haemophilus parasuis) protein is Peptide deformylase.